Reading from the N-terminus, the 347-residue chain is Merozoite surface protein P12 (347 aa).

Positions 1-23 (MIKLSKKYCLGISFVLYILLSVC) form a signal peptide, or 25. 2 consecutive 6-Cys domains span residues 27–172 (KNLT…IPSL) and 175–305 (KVKG…ISSS). Asparagine 28 carries an N-linked (GlcNAc...) asparagine glycan. 3 disulfide bridges follow: cysteine 31–cysteine 53, cysteine 67–cysteine 138, and cysteine 81–cysteine 136. N-linked (GlcNAc...) asparagine glycosylation is found at asparagine 147, asparagine 200, asparagine 228, asparagine 242, asparagine 265, and asparagine 322. Intrachain disulfides connect cysteine 179/cysteine 211, cysteine 225/cysteine 286, and cysteine 236/cysteine 284. Asparagine 322 carries the GPI-anchor amidated asparagine lipid modification. The propeptide at 323 to 347 (SSFLTLSSYCAFITFIITSFLSFIL) is removed in mature form.

As to quaternary structure, heterodimer; heterodimerizes with PF41. May form an antiparallel heterodimer with PF41.

The protein localises to the cell surface. The protein resides in the cell membrane. The sequence is that of Merozoite surface protein P12 (PF12) from Plasmodium falciparum.